The sequence spans 195 residues: Coagulogen (195 aa).

Positions 1–20 (MEKKLLGIAILFVTVVSVLA) are cleaved as a signal peptide. 8 disulfides stabilise this stretch: C28/C188, C30/C115, C80/C182, C85/C141, C95/C189, C108/C161, C147/C191, and C155/C193.

The protein belongs to the coagulin family. Coagulogen is cleaved after Arg-38 and Arg-66 by a clotting enzyme contained in the hemocyte and activated by a bacterial endotoxin (lipopolysaccharide). This cleavage releases the peptide C and leaves 2 chains of coagulin, A and B, linked by two disulfide bonds. Coagulin molecules interlink to form a gel. As to expression, hemolymph.

The protein localises to the secreted. Coagulogen is a gel-forming protein of hemolymph; it hinders the spread of invaders by immobilizing them. This chain is Coagulogen, found in Limulus polyphemus (Atlantic horseshoe crab).